Here is a 274-residue protein sequence, read N- to C-terminus: MAVKTYKPTSPGRRFVTVSSFEEITKTEPEKSLIVPLKKHAGRNNQGRLTVRHRGGGHKRMYRIIDFKRNKDGIPAKVVAIEYDPNRTARIALLAYADGEKRYIIAPHGLKVGDVLMSGPDADIKVGNALPLANIPVGTLVHNIELYPGKGGQLVRAAGTAAQLLGKEGRYAILRLPSGEMRKVLLECRATIGQVGNLEHENITIGKAGRARWLGIRPTVRGVVMNPVDHPHGGGEGRSPIGRHPVTPWGKPTLGVKTRKKNKASSKLIIKRRK.

Positions Met225 to Lys274 are disordered. Positions Lys257 to Lys274 are enriched in basic residues.

Belongs to the universal ribosomal protein uL2 family. As to quaternary structure, part of the 50S ribosomal subunit. Forms a bridge to the 30S subunit in the 70S ribosome.

In terms of biological role, one of the primary rRNA binding proteins. Required for association of the 30S and 50S subunits to form the 70S ribosome, for tRNA binding and peptide bond formation. It has been suggested to have peptidyltransferase activity; this is somewhat controversial. Makes several contacts with the 16S rRNA in the 70S ribosome. The protein is Large ribosomal subunit protein uL2 of Carboxydothermus hydrogenoformans (strain ATCC BAA-161 / DSM 6008 / Z-2901).